We begin with the raw amino-acid sequence, 114 residues long: Protein S40-2 (114 aa).

Residues 23–50 (RYTKLYNSRNDEKKGTRRHETAEKTSPV) form a disordered region. A compositionally biased stretch (basic and acidic residues) spans 31 to 45 (RNDEKKGTRRHETAE).

The protein belongs to the senescence regulator S40 family.

It localises to the cytoplasm. The protein is Protein S40-2 of Arabidopsis thaliana (Mouse-ear cress).